The chain runs to 338 residues: 4-hydroxy-2-oxovalerate aldolase (338 aa).

Residues 6–256 (IHIVDTTLRD…RTGVDFYKVM (251 aa)) form the Pyruvate carboxyltransferase domain. Residue 14–15 (RD) participates in substrate binding. Mn(2+) is bound at residue Asp15. His18 (proton acceptor) is an active-site residue. Residues Ser168 and His195 each coordinate substrate. The Mn(2+) site is built by His195 and His197. Tyr286 contacts substrate.

It belongs to the 4-hydroxy-2-oxovalerate aldolase family.

The catalysed reaction is (S)-4-hydroxy-2-oxopentanoate = acetaldehyde + pyruvate. In Moorella thermoacetica (strain ATCC 39073 / JCM 9320), this protein is 4-hydroxy-2-oxovalerate aldolase.